Here is a 212-residue protein sequence, read N- to C-terminus: Large ribosomal subunit protein uL3 (212 aa).

Over residues 136-155 (THGNSLSHRSNGSIGQNQTP) the composition is skewed to polar residues. The interval 136–157 (THGNSLSHRSNGSIGQNQTPGR) is disordered. Position 153 is an N5-methylglutamine (Q153).

Belongs to the universal ribosomal protein uL3 family. In terms of assembly, part of the 50S ribosomal subunit. Forms a cluster with proteins L14 and L19. Methylated by PrmB.

One of the primary rRNA binding proteins, it binds directly near the 3'-end of the 23S rRNA, where it nucleates assembly of the 50S subunit. In Shewanella putrefaciens (strain CN-32 / ATCC BAA-453), this protein is Large ribosomal subunit protein uL3.